Reading from the N-terminus, the 174-residue chain is Repair DNA polymerase X (174 aa).

The tract at residues 42–51 (REEKMLNDVD) is involved in ssDNA binding. Mg(2+)-binding residues include Asp-49 and Asp-51. Cys-81 and Cys-86 are joined by a disulfide. Asp-100 is a binding site for Mg(2+).

This sequence belongs to the DNA polymerase type-X family. It depends on Mg(2+) as a cofactor.

The protein localises to the virion. It carries out the reaction DNA(n) + a 2'-deoxyribonucleoside 5'-triphosphate = DNA(n+1) + diphosphate. Its function is as follows. Error-prone polymerase lacking a proofreading 3'-5' exonuclease which catalyzes the gap-filling reaction during the DNA repair process. Specifically binds intermediates in the single-nucleotide base-excision repair process. Also catalyzes DNA polymerization with low nucleotide-insertion fidelity. Probably acts as a strategic DNA mutase, which gives rise to a rapid emergence of variants. Generates mismatched G-G pairs, in that case, the polymerase first binds the deoxynucleotide followed by mismatch formation. Together with the viral DNA ligase, fills the single nucleotide gaps generated by the AP endonuclease. Binds DNA with high affinity via the helix alphaE. The sequence is that of Repair DNA polymerase X from African swine fever virus (isolate Tick/South Africa/Pretoriuskop Pr4/1996) (ASFV).